A 574-amino-acid polypeptide reads, in one-letter code: Membrane protein insertase YidC (574 aa).

The next 6 helical transmembrane spans lie at 6 to 26, 356 to 376, 380 to 400, 447 to 467, 489 to 509, and 525 to 545; these read VFLI…WGKD, FSIM…LHSF, WGWA…PLSA, GGCL…WVLV, PYFI…KLTP, and PLVF…YWVV.

It belongs to the OXA1/ALB3/YidC family. Type 1 subfamily. As to quaternary structure, interacts with the Sec translocase complex via SecD. Specifically interacts with transmembrane segments of nascent integral membrane proteins during membrane integration.

The protein localises to the cell inner membrane. Required for the insertion and/or proper folding and/or complex formation of integral membrane proteins into the membrane. Involved in integration of membrane proteins that insert both dependently and independently of the Sec translocase complex, as well as at least some lipoproteins. Aids folding of multispanning membrane proteins. The sequence is that of Membrane protein insertase YidC from Xanthomonas axonopodis pv. citri (strain 306).